Reading from the N-terminus, the 1668-residue chain is Kinesin-like protein KIF21B (1668 aa).

The 364-residue stretch at 8–371 (CVKVAVRIRP…LKYANRARNI (364 aa)) folds into the Kinesin motor domain. 87 to 94 (GQTGAGKT) lines the ATP pocket. The stretch at 372–465 (KNKVVVNQDK…LMSQEANLLL (94 aa)) forms a coiled coil. The tract at residues 401 to 1100 (MEYKAGKRVI…LQALIYNVQH (700 aa)) is interaction with TRIM3. Disordered stretches follow at residues 553 to 629 (KKKE…PEEK) and 837 to 866 (RVGLKPPNMDSGAEVSASTTSSEAESGARS). Acidic residues predominate over residues 579-628 (NSEETDENEAEEEEEERDESGCEEEEGREDEDEDSGSEESLVDSDSDPEE). S580 is subject to Phosphoserine. T583 bears the Phosphothreonine mark. Residues 847–866 (SGAEVSASTTSSEAESGARS) show a composition bias toward low complexity. Residues 924 to 1019 (IIDIVMQRMT…TKEELDSTDT (96 aa)) adopt a coiled-coil conformation. S1150, S1168, and S1217 each carry phosphoserine. Over residues 1199-1219 (LPTRGSTFPRQSRGATDTSPL) the composition is skewed to polar residues. Positions 1199 to 1253 (LPTRGSTFPRQSRGATDTSPLTRRKSYDRGQPIRSTDMGFTPPSSPPTRPRNDRN) are disordered. T1239 is modified (phosphothreonine). S1243 is subject to Phosphoserine. WD repeat units lie at residues 1308–1345 (GHTKPILCLDATDELLFTGSKDRSCKMWNLVTGQEIAA), 1348–1386 (GHPNNVVSIKYCSHSGLVFSVSSSYIKVWDIRDSAKCIR), 1412–1450 (QGEHQINQMALSPSGSMLYVASGNAVRIWELNRFQPIGK), 1453–1495 (GHIG…TGTI), 1504–1541 (PHYDGIECLAIQGDILFSGSRDNGIKKWDLDQQELIQQ), 1545–1584 (AHKDWVCALAFVPGRPMLLSACRAGFIKVWNVDNFTPIGE), and 1587–1624 (GHDSPINAICTNSKHIFTASSDCRVKLWNYVPGLTPCL).

Belongs to the TRAFAC class myosin-kinesin ATPase superfamily. Kinesin family. In terms of assembly, interacts with TRIM3; the interaction positively affects motility of KIF21B. Interacts with GABARAP and GABA(A) receptor subunits: GABRG2, GABRA1 and GABRA2. May interact with GABA(A) receptor subunits: GABRB2 and GABRB3. Expressed in brain (at protein level). Expressed in spleen and at lower levels in testes.

The protein resides in the cytoplasm. It localises to the cytoskeleton. Its subcellular location is the cell projection. It is found in the dendrite. The protein localises to the growth cone. The protein resides in the axon. It localises to the cytoplasmic vesicle. In terms of biological role, plus-end directed microtubule-dependent motor protein which displays processive activity. Is involved in regulation of microtubule dynamics, synapse function and neuronal morphology, including dendritic tree branching and spine formation. Plays a role in lerning and memory. Involved in delivery of gamma-aminobutyric acid (GABA(A)) receptor to cell surface. The chain is Kinesin-like protein KIF21B (Kif21b) from Mus musculus (Mouse).